The sequence spans 282 residues: 4-hydroxy-3-methylbut-2-enyl diphosphate reductase (282 aa).

Cysteine 14 is a binding site for [4Fe-4S] cluster. Positions 43 and 78 each coordinate (2E)-4-hydroxy-3-methylbut-2-enyl diphosphate. Histidine 43 and histidine 78 together coordinate dimethylallyl diphosphate. Isopentenyl diphosphate-binding residues include histidine 43 and histidine 78. Cysteine 100 is a [4Fe-4S] cluster binding site. Residue histidine 128 participates in (2E)-4-hydroxy-3-methylbut-2-enyl diphosphate binding. Histidine 128 contacts dimethylallyl diphosphate. Residue histidine 128 participates in isopentenyl diphosphate binding. Residue glutamate 130 is the Proton donor of the active site. Residue threonine 164 participates in (2E)-4-hydroxy-3-methylbut-2-enyl diphosphate binding. Cysteine 192 provides a ligand contact to [4Fe-4S] cluster. Serine 220, serine 221, asparagine 222, and serine 266 together coordinate (2E)-4-hydroxy-3-methylbut-2-enyl diphosphate. 4 residues coordinate dimethylallyl diphosphate: serine 220, serine 221, asparagine 222, and serine 266. 4 residues coordinate isopentenyl diphosphate: serine 220, serine 221, asparagine 222, and serine 266.

Belongs to the IspH family. [4Fe-4S] cluster is required as a cofactor.

The enzyme catalyses isopentenyl diphosphate + 2 oxidized [2Fe-2S]-[ferredoxin] + H2O = (2E)-4-hydroxy-3-methylbut-2-enyl diphosphate + 2 reduced [2Fe-2S]-[ferredoxin] + 2 H(+). It carries out the reaction dimethylallyl diphosphate + 2 oxidized [2Fe-2S]-[ferredoxin] + H2O = (2E)-4-hydroxy-3-methylbut-2-enyl diphosphate + 2 reduced [2Fe-2S]-[ferredoxin] + 2 H(+). Its pathway is isoprenoid biosynthesis; dimethylallyl diphosphate biosynthesis; dimethylallyl diphosphate from (2E)-4-hydroxy-3-methylbutenyl diphosphate: step 1/1. The protein operates within isoprenoid biosynthesis; isopentenyl diphosphate biosynthesis via DXP pathway; isopentenyl diphosphate from 1-deoxy-D-xylulose 5-phosphate: step 6/6. Its function is as follows. Catalyzes the conversion of 1-hydroxy-2-methyl-2-(E)-butenyl 4-diphosphate (HMBPP) into a mixture of isopentenyl diphosphate (IPP) and dimethylallyl diphosphate (DMAPP). Acts in the terminal step of the DOXP/MEP pathway for isoprenoid precursor biosynthesis. In Clostridium perfringens (strain SM101 / Type A), this protein is 4-hydroxy-3-methylbut-2-enyl diphosphate reductase.